The primary structure comprises 176 residues: ATP-dependent protease subunit HslV (176 aa).

Residue threonine 5 is part of the active site. Residues glycine 161, cysteine 164, and threonine 167 each coordinate Na(+).

This sequence belongs to the peptidase T1B family. HslV subfamily. As to quaternary structure, a double ring-shaped homohexamer of HslV is capped on each side by a ring-shaped HslU homohexamer. The assembly of the HslU/HslV complex is dependent on binding of ATP.

The protein localises to the cytoplasm. The catalysed reaction is ATP-dependent cleavage of peptide bonds with broad specificity.. Allosterically activated by HslU binding. Protease subunit of a proteasome-like degradation complex believed to be a general protein degrading machinery. In Wolinella succinogenes (strain ATCC 29543 / DSM 1740 / CCUG 13145 / JCM 31913 / LMG 7466 / NCTC 11488 / FDC 602W) (Vibrio succinogenes), this protein is ATP-dependent protease subunit HslV.